Here is a 220-residue protein sequence, read N- to C-terminus: Protein-L-isoaspartate O-methyltransferase (220 aa).

Ser67 is a catalytic residue.

It belongs to the methyltransferase superfamily. L-isoaspartyl/D-aspartyl protein methyltransferase family.

It localises to the cytoplasm. It carries out the reaction [protein]-L-isoaspartate + S-adenosyl-L-methionine = [protein]-L-isoaspartate alpha-methyl ester + S-adenosyl-L-homocysteine. In terms of biological role, catalyzes the methyl esterification of L-isoaspartyl residues in peptides and proteins that result from spontaneous decomposition of normal L-aspartyl and L-asparaginyl residues. It plays a role in the repair and/or degradation of damaged proteins. In Chlorobium phaeobacteroides (strain BS1), this protein is Protein-L-isoaspartate O-methyltransferase.